Here is a 459-residue protein sequence, read N- to C-terminus: Interleukin-1 receptor-associated kinase 4 (459 aa).

The residue at position 1 (M1) is an N-acetylmethionine. The 85-residue stretch at 20–104 folds into the Death domain; sequence RKLSDFIDPQ…APATLLLPDA (85 aa). An N6-acetyllysine modification is found at K34. Residues 115–161 form a disordered region; that stretch reads REAATVAQTHGPCQEKDRTSVMPMPKLEHSCEPPDSSSPDNRSVESS. The Protein kinase domain maps to 186–454; that stretch reads SAGGNRMGEG…PDIAKVQQLL (269 aa). ATP is bound by residues 192 to 200 and K213; that span reads MGEGGFGVV. D311 functions as the Proton acceptor in the catalytic mechanism. Residues 313-316 and D329 each bind ATP; that span reads KSAN. 2 positions are modified to phosphothreonine: T342 and T345. S346 is modified (phosphoserine).

The protein belongs to the protein kinase superfamily. TKL Ser/Thr protein kinase family. Pelle subfamily. As to quaternary structure, associates with MYD88 and IRAK2 to form a ternary complex called the Myddosome. Once phosphorylated, IRAK4 dissociates from the receptor complex and then associates with the TNF receptor-associated factor 6 (TRAF6), IRAK1, and PELI1; this intermediate complex is required for subsequent NF-kappa-B activation. Direct binding of SMAD6 to PELI1 prevents complex formation and hence negatively regulates IL1R-TLR signaling and eventually NF-kappa-B-mediated gene expression. Interacts with IL1RL1. Interacts (when phosphorylated) with IRAK1. May interact (when phosphorylated) with IRAK3. Mg(2+) is required as a cofactor. Phosphorylated.

Its subcellular location is the cytoplasm. It catalyses the reaction L-seryl-[protein] + ATP = O-phospho-L-seryl-[protein] + ADP + H(+). It carries out the reaction L-threonyl-[protein] + ATP = O-phospho-L-threonyl-[protein] + ADP + H(+). Functionally, serine/threonine-protein kinase that plays a critical role in initiating innate immune response against foreign pathogens. Involved in Toll-like receptor (TLR) and IL-1R signaling pathways. Is rapidly recruited by MYD88 to the receptor-signaling complex upon TLR activation to form the Myddosome together with IRAK2. Phosphorylates initially IRAK1, thus stimulating the kinase activity and intensive autophosphorylation of IRAK1. Phosphorylates E3 ubiquitin ligases Pellino proteins (PELI1, PELI2 and PELI3) to promote pellino-mediated polyubiquitination of IRAK1. Then, the ubiquitin-binding domain of IKBKG/NEMO binds to polyubiquitinated IRAK1 bringing together the IRAK1-MAP3K7/TAK1-TRAF6 complex and the NEMO-IKKA-IKKB complex. In turn, MAP3K7/TAK1 activates IKKs (CHUK/IKKA and IKBKB/IKKB) leading to NF-kappa-B nuclear translocation and activation. Alternatively, phosphorylates TIRAP to promote its ubiquitination and subsequent degradation. Phosphorylates NCF1 and regulates NADPH oxidase activation after LPS stimulation suggesting a similar mechanism during microbial infections. The protein is Interleukin-1 receptor-associated kinase 4 (Irak4) of Mus musculus (Mouse).